Reading from the N-terminus, the 146-residue chain is 3-hydroxyacyl-[acyl-carrier-protein] dehydratase FabZ (146 aa).

Residue His49 is part of the active site.

The protein belongs to the thioester dehydratase family. FabZ subfamily.

The protein localises to the cytoplasm. It carries out the reaction a (3R)-hydroxyacyl-[ACP] = a (2E)-enoyl-[ACP] + H2O. Functionally, involved in unsaturated fatty acids biosynthesis. Catalyzes the dehydration of short chain beta-hydroxyacyl-ACPs and long chain saturated and unsaturated beta-hydroxyacyl-ACPs. The sequence is that of 3-hydroxyacyl-[acyl-carrier-protein] dehydratase FabZ from Wolbachia sp. subsp. Brugia malayi (strain TRS).